Reading from the N-terminus, the 93-residue chain is Small ribosomal subunit protein uS19 (93 aa).

A disordered region spans residues Glu73 to Arg93. A compositionally biased stretch (basic and acidic residues) spans His83 to Arg93.

The protein belongs to the universal ribosomal protein uS19 family.

Protein S19 forms a complex with S13 that binds strongly to the 16S ribosomal RNA. This Streptomyces coelicolor (strain ATCC BAA-471 / A3(2) / M145) protein is Small ribosomal subunit protein uS19.